The primary structure comprises 889 residues: Cytoplasmic aconitate hydratase (889 aa).

Substrate contacts are provided by residues Gln-86 and 205-207; that span reads DSH. The [4Fe-4S] cluster site is built by Cys-437, Cys-503, and Cys-506. Residues Arg-536, Arg-541, Arg-699, and 779-780 each bind substrate; that span reads SR.

It belongs to the aconitase/IPM isomerase family. In terms of assembly, interacts (when associated with the 4Fe-4S) with FBXL5. Interacts with frataxin(81-210). Requires [4Fe-4S] cluster as cofactor.

It is found in the cytoplasm. The protein resides in the cytosol. The enzyme catalyses citrate = D-threo-isocitrate. Functionally, bifunctional iron sensor that switches between 2 activities depending on iron availability. Iron deprivation, promotes its mRNA binding activity through which it regulates the expression of genes involved in iron uptake, sequestration and utilization. Binds to iron-responsive elements (IRES) in the untranslated region of target mRNAs preventing for instance the translation of ferritin and aminolevulinic acid synthase and stabilizing the transferrin receptor mRNA. Its function is as follows. Conversely, when cellular iron levels are high, binds a 4Fe-4S cluster which precludes RNA binding activity and promotes the aconitase activity, the isomerization of citrate to isocitrate via cis-aconitate. The sequence is that of Cytoplasmic aconitate hydratase (Aco1) from Rattus norvegicus (Rat).